A 122-amino-acid polypeptide reads, in one-letter code: uncharacterized protein (122 aa).

2 disordered regions span residues 1–30 (MGRE…DQPE) and 96–122 (FKSC…DAMG).

This is an uncharacterized protein from Homo sapiens (Human).